The following is a 528-amino-acid chain: GTPase Obg (528 aa).

The Obg domain maps to 2–159; sequence ASFVDRVVLH…SDIVLELKSI (158 aa). The region spanning 160–343 is the OBG-type G domain; it reads ADIALVGFPS…LGFAMAEIVQ (184 aa). Residues 166–173, 191–195, 212–215, 295–298, and 324–326 contribute to the GTP site; these read GFPSAGKS, FTTLI, DVPG, NKVD, and SAT. Mg(2+) contacts are provided by S173 and T193. The OCT domain occupies 363–447; that stretch reads PRAVNESGFK…DDGVVFDWEP (85 aa). The interval 471–490 is disordered; that stretch reads DRPTRSQKRDEQIERREAKA.

The protein belongs to the TRAFAC class OBG-HflX-like GTPase superfamily. OBG GTPase family. Monomer. It depends on Mg(2+) as a cofactor.

Its subcellular location is the cytoplasm. An essential GTPase which binds GTP, GDP and possibly (p)ppGpp with moderate affinity, with high nucleotide exchange rates and a fairly low GTP hydrolysis rate. Plays a role in control of the cell cycle, stress response, ribosome biogenesis and in those bacteria that undergo differentiation, in morphogenesis control. In Paenarthrobacter aurescens (strain TC1), this protein is GTPase Obg.